We begin with the raw amino-acid sequence, 261 residues long: Protein OSB1, mitochondrial (261 aa).

Residues 1–28 (MNTFFKLGSLIQRTASQISSSFPKSRFF) constitute a mitochondrion transit peptide. One can recognise an SSB domain in the interval 55–155 (VNSVSLMGFV…VKVAEVNYVA (101 aa)). A PDF region region spans residues 189–238 (WQVFFSNPYDWWDNRRNKKNPKQPDFKHKDTGEALWLCSDLPDWITRRLE).

In terms of tissue distribution, expressed in root elongation zone and in gametophytic cells.

The protein resides in the mitochondrion. Its function is as follows. Regulates mitochondrial DNA recombination. Represses homologous recombination, preventing mitochondrial genome instability and unbalanced transmission of alternative mtDNA configurations. Binds preferentially single-stranded DNA. Does not bind to RNA. This is Protein OSB1, mitochondrial (OSB1) from Arabidopsis thaliana (Mouse-ear cress).